Here is a 585-residue protein sequence, read N- to C-terminus: Type IV pilus assembly ATPase TfpB (585 aa).

346–351 (GSGKTT) provides a ligand contact to ATP. Cys476, Cys479, Cys511, and Cys514 together coordinate Zn(2+).

Belongs to the GSP E family.

The protein localises to the cytoplasm. Functionally, ATPase component of the type IV pilus (T4P). Acts as a molecular motor to provide the energy that is required for biogenesis of the pilus and the extrusion of substrates generated in the cytoplasm. TfpB is required for optimal T4P extension and, consequently, efficient natural transformation. May play a role in initiating T4P extension. In Acinetobacter baylyi (strain ATCC 33305 / BD413 / ADP1), this protein is Type IV pilus assembly ATPase TfpB.